The sequence spans 334 residues: Succinylglutamate desuccinylase (334 aa).

Residues histidine 59, glutamate 62, and histidine 151 each coordinate Zn(2+). The active site involves glutamate 215.

The protein belongs to the AspA/AstE family. Succinylglutamate desuccinylase subfamily. Zn(2+) serves as cofactor.

The catalysed reaction is N-succinyl-L-glutamate + H2O = L-glutamate + succinate. It functions in the pathway amino-acid degradation; L-arginine degradation via AST pathway; L-glutamate and succinate from L-arginine: step 5/5. Functionally, transforms N(2)-succinylglutamate into succinate and glutamate. In Pseudomonas fluorescens (strain SBW25), this protein is Succinylglutamate desuccinylase.